The sequence spans 468 residues: 3-isopropylmalate dehydratase large subunit (468 aa).

Positions 349, 409, and 412 each coordinate [4Fe-4S] cluster.

Belongs to the aconitase/IPM isomerase family. LeuC type 1 subfamily. In terms of assembly, heterodimer of LeuC and LeuD. [4Fe-4S] cluster is required as a cofactor.

It carries out the reaction (2R,3S)-3-isopropylmalate = (2S)-2-isopropylmalate. It participates in amino-acid biosynthesis; L-leucine biosynthesis; L-leucine from 3-methyl-2-oxobutanoate: step 2/4. Its function is as follows. Catalyzes the isomerization between 2-isopropylmalate and 3-isopropylmalate, via the formation of 2-isopropylmaleate. The sequence is that of 3-isopropylmalate dehydratase large subunit from Shewanella baltica (strain OS185).